We begin with the raw amino-acid sequence, 440 residues long: Xaa-Pro dipeptidase (440 aa).

Aspartate 244, aspartate 255, histidine 335, glutamate 380, and glutamate 419 together coordinate Mn(2+).

The protein belongs to the peptidase M24B family. Bacterial-type prolidase subfamily. The cofactor is Mn(2+).

The catalysed reaction is Xaa-L-Pro dipeptide + H2O = an L-alpha-amino acid + L-proline. Splits dipeptides with a prolyl residue in the C-terminal position. In Shewanella baltica (strain OS185), this protein is Xaa-Pro dipeptidase.